The primary structure comprises 437 residues: Glutamyl-tRNA reductase (437 aa).

Substrate contacts are provided by residues 49–52 (TCNR), S109, 114–116 (ETQ), and Q120. The active-site Nucleophile is the C50. Residue 189–194 (GAGEMS) participates in NADP(+) binding.

This sequence belongs to the glutamyl-tRNA reductase family. Homodimer.

The enzyme catalyses (S)-4-amino-5-oxopentanoate + tRNA(Glu) + NADP(+) = L-glutamyl-tRNA(Glu) + NADPH + H(+). Its pathway is porphyrin-containing compound metabolism; protoporphyrin-IX biosynthesis; 5-aminolevulinate from L-glutamyl-tRNA(Glu): step 1/2. In terms of biological role, catalyzes the NADPH-dependent reduction of glutamyl-tRNA(Glu) to glutamate 1-semialdehyde (GSA). The protein is Glutamyl-tRNA reductase of Listeria welshimeri serovar 6b (strain ATCC 35897 / DSM 20650 / CCUG 15529 / CIP 8149 / NCTC 11857 / SLCC 5334 / V8).